Reading from the N-terminus, the 689-residue chain is DNA ligase (689 aa).

NAD(+) contacts are provided by residues 40–44 (DAEYD), 89–90 (SL), and Glu-121. The active-site N6-AMP-lysine intermediate is Lys-123. Arg-144, Glu-179, Lys-295, and Lys-319 together coordinate NAD(+). The Zn(2+) site is built by Cys-413, Cys-416, Cys-431, and Cys-437. Residues 610–689 (RAQSSLTGKI…EEWLTLIKNA (80 aa)) form the BRCT domain.

This sequence belongs to the NAD-dependent DNA ligase family. LigA subfamily. Mg(2+) serves as cofactor. Mn(2+) is required as a cofactor.

It catalyses the reaction NAD(+) + (deoxyribonucleotide)n-3'-hydroxyl + 5'-phospho-(deoxyribonucleotide)m = (deoxyribonucleotide)n+m + AMP + beta-nicotinamide D-nucleotide.. In terms of biological role, DNA ligase that catalyzes the formation of phosphodiester linkages between 5'-phosphoryl and 3'-hydroxyl groups in double-stranded DNA using NAD as a coenzyme and as the energy source for the reaction. It is essential for DNA replication and repair of damaged DNA. The protein is DNA ligase of Rickettsia akari (strain Hartford).